The primary structure comprises 105 residues: Translation initiation factor 1A (105 aa).

The S1-like domain occupies 12-87; the sequence is TRVRTPREEN…QKCDIIWRYT (76 aa).

The protein belongs to the eIF-1A family.

In terms of biological role, seems to be required for maximal rate of protein biosynthesis. Enhances ribosome dissociation into subunits and stabilizes the binding of the initiator Met-tRNA(I) to 40 S ribosomal subunits. This is Translation initiation factor 1A (eIF1A) from Methanococcus aeolicus (strain ATCC BAA-1280 / DSM 17508 / OCM 812 / Nankai-3).